A 223-amino-acid chain; its full sequence is Coiled-coil domain-containing protein 124 (223 aa).

A disordered region spans residues 1–126; the sequence is MPKKFQGENT…AEKAKSHLEV (126 aa). Residues 15 to 82 are a coiled coil; it reads ARARRAEAKA…LLEEEDSKLK (68 aa). Composition is skewed to basic and acidic residues over residues 18–74 and 99–126; these read RRAE…QRLL and QIEDTLRRDHQLREAPDTAEKAKSHLEV. Residues serine 141 and serine 194 each carry the phosphoserine modification. Residues 204–223 are disordered; it reads WLRSPDNPMNQRAVPFNAPK.

This sequence belongs to the CCDC124 family. As to quaternary structure, associates with translationally inactive ribosomes in the nonrotated state. Interacts with RASGEF1B. As to expression, ubiquitously expressed.

It is found in the cytoplasm. Its subcellular location is the cytoskeleton. The protein localises to the microtubule organizing center. It localises to the centrosome. The protein resides in the midbody. Its function is as follows. Ribosome-binding protein involved in ribosome hibernation: associates with translationally inactive ribosomes and stabilizes the nonrotated conformation of the 80S ribosome, thereby promoting ribosome preservation and storage. Also required for proper progression of late cytokinetic stages. The chain is Coiled-coil domain-containing protein 124 from Homo sapiens (Human).